The following is a 124-amino-acid chain: Small ribosomal subunit protein bS6 (124 aa).

Residues 96–124 form a disordered region; the sequence is ETAPSPMMKEVQREEARKAAQTTTEGQPA. Residues 115 to 124 are compositionally biased toward polar residues; sequence AQTTTEGQPA.

It belongs to the bacterial ribosomal protein bS6 family.

In terms of biological role, binds together with bS18 to 16S ribosomal RNA. The sequence is that of Small ribosomal subunit protein bS6 from Cupriavidus metallidurans (strain ATCC 43123 / DSM 2839 / NBRC 102507 / CH34) (Ralstonia metallidurans).